Reading from the N-terminus, the 716-residue chain is Polyribonucleotide nucleotidyltransferase (716 aa).

Residues D488 and D494 each coordinate Mg(2+). Residues P555–I614 form the KH domain. Residues G624–K692 enclose the S1 motif domain. The interval D695–T716 is disordered.

Belongs to the polyribonucleotide nucleotidyltransferase family. Requires Mg(2+) as cofactor.

It localises to the cytoplasm. The catalysed reaction is RNA(n+1) + phosphate = RNA(n) + a ribonucleoside 5'-diphosphate. Its function is as follows. Involved in mRNA degradation. Catalyzes the phosphorolysis of single-stranded polyribonucleotides processively in the 3'- to 5'-direction. The protein is Polyribonucleotide nucleotidyltransferase of Caulobacter sp. (strain K31).